Here is a 487-residue protein sequence, read N- to C-terminus: Glutamyl-tRNA(Gln) amidotransferase subunit A (487 aa).

Residues Lys-79 and Ser-158 each act as charge relay system in the active site. Ser-182 serves as the catalytic Acyl-ester intermediate.

This sequence belongs to the amidase family. GatA subfamily. In terms of assembly, heterotrimer of A, B and C subunits.

The catalysed reaction is L-glutamyl-tRNA(Gln) + L-glutamine + ATP + H2O = L-glutaminyl-tRNA(Gln) + L-glutamate + ADP + phosphate + H(+). Functionally, allows the formation of correctly charged Gln-tRNA(Gln) through the transamidation of misacylated Glu-tRNA(Gln) in organisms which lack glutaminyl-tRNA synthetase. The reaction takes place in the presence of glutamine and ATP through an activated gamma-phospho-Glu-tRNA(Gln). This chain is Glutamyl-tRNA(Gln) amidotransferase subunit A, found in Ehrlichia ruminantium (strain Gardel).